We begin with the raw amino-acid sequence, 160 residues long: SsrA-binding protein (160 aa).

The disordered stretch occupies residues 136–160 (KRDTMRERDSNRELQRAVRNKGKED).

Belongs to the SmpB family.

The protein localises to the cytoplasm. Functionally, required for rescue of stalled ribosomes mediated by trans-translation. Binds to transfer-messenger RNA (tmRNA), required for stable association of tmRNA with ribosomes. tmRNA and SmpB together mimic tRNA shape, replacing the anticodon stem-loop with SmpB. tmRNA is encoded by the ssrA gene; the 2 termini fold to resemble tRNA(Ala) and it encodes a 'tag peptide', a short internal open reading frame. During trans-translation Ala-aminoacylated tmRNA acts like a tRNA, entering the A-site of stalled ribosomes, displacing the stalled mRNA. The ribosome then switches to translate the ORF on the tmRNA; the nascent peptide is terminated with the 'tag peptide' encoded by the tmRNA and targeted for degradation. The ribosome is freed to recommence translation, which seems to be the essential function of trans-translation. In Pseudomonas putida (strain GB-1), this protein is SsrA-binding protein.